Here is a 543-residue protein sequence, read N- to C-terminus: MAKNIQFDIEARDKLKKGVDALANAVKVTLGPKGRNVVLQKSFGGPQVTKDGVSVAKEIELEDPIENLGAQMVKEVASKTNDIAGDGTTTATVLAQAIVREGLKNVAAGANPMDLKRGIDKAVEAVVNDLKKQSREVGGSNEKIKQVASISANNDEAIGELISVAFDKVGKEGVITVEEAKGIETTVDVVEGMQFDRGYQSPYFVTNSDKMITEFDNPYILLSDKKISSMKDLLPILEPVAQSGKPLLIISEEVEGEALATLVVNKIRGALKVAAVKAPGFGDRRKAMLEDIAILTGGTVISEETGSKLEDTKLSFLGKAERVTIDKDNTTIVNGNGKKSDIESRVNQIKAQIEKTTSDYDKEKLQERLAKLAGGVAVLYVGAASEVEMKEKKDRVDDALHATRAAVEEGIVAGGGVALVRAIKSLNGLKVDNVDQDTGIKIVKRSLQEPLRQIVANAGEEGSVIVAKVAEGKNEFGYDAKLGEYKNMISEGIIDPTKVTRVALENAASVSGMLLTTECVITEIKKEEPAMPQMPNSGMGGMM.

Residues 29-32 (TLGP), lysine 50, 86-90 (DGTTT), glycine 415, and aspartate 495 contribute to the ATP site.

This sequence belongs to the chaperonin (HSP60) family. Forms a cylinder of 14 subunits composed of two heptameric rings stacked back-to-back. Interacts with the co-chaperonin GroES.

It localises to the cytoplasm. It catalyses the reaction ATP + H2O + a folded polypeptide = ADP + phosphate + an unfolded polypeptide.. Functionally, together with its co-chaperonin GroES, plays an essential role in assisting protein folding. The GroEL-GroES system forms a nano-cage that allows encapsulation of the non-native substrate proteins and provides a physical environment optimized to promote and accelerate protein folding. The polypeptide is Chaperonin GroEL (Karelsulcia muelleri (strain GWSS) (Sulcia muelleri)).